The primary structure comprises 369 residues: Glutamate 5-kinase (369 aa).

Position 14 (lysine 14) interacts with ATP. The substrate site is built by serine 56, aspartate 143, and asparagine 155. ATP-binding positions include 175–176 (SD) and 215–221 (TGGMASK). The PUA domain occupies 277–351 (AGKIRLDQGA…GMKTQELPDD (75 aa)).

The protein belongs to the glutamate 5-kinase family.

It is found in the cytoplasm. It catalyses the reaction L-glutamate + ATP = L-glutamyl 5-phosphate + ADP. The protein operates within amino-acid biosynthesis; L-proline biosynthesis; L-glutamate 5-semialdehyde from L-glutamate: step 1/2. Functionally, catalyzes the transfer of a phosphate group to glutamate to form L-glutamate 5-phosphate. The chain is Glutamate 5-kinase from Corynebacterium efficiens (strain DSM 44549 / YS-314 / AJ 12310 / JCM 11189 / NBRC 100395).